The following is a 582-amino-acid chain: MDFEDDYTHSACRNTYQGFNGMDRDYGPGSYGGMDRDYGHGSYGGQRSMDSYLNQSYGMDNHSGGGGGSRFGPYESYDSRSSLGGRDLYRSGYGFNEPEQSRFGGSYGGRFESSYRNSLDSFGGRNQGGSSWEAPYSRSKLRPGFMEDRGRENYSSYSSFSSPHMKPAPVGSRGRGTPAYPESTFGSRNYDAFGGPSTGRGRGRGHMGDFGSIHRPGIVVDYQNKSTNVTVAAARGIKRKMMQPFNKPSGTFIKKPKLAKPMEKISLSKSPTKTDPKNEEEEKRRIEARREKQRRRREKNSEKYGDGYRMAFTCSFCKFRTFEEKDIELHLESSSHQETLDHIQKQTKFDKVVMEFLHECMVNKFKKTSIRKQQTNNQTEVVKIIEKDVMEGVTVDDHMMKVETVHCSACSVYIPALHSSVQQHLKSPDHIKGKQAYKEQIKRESVLTATSILNNPIVKARYERFVKGENPFEIQDHSQDQQIEGDEEDEEKIDEPIEEEEDEDEEEEAEEVGEVEEVEEVEEVREGGIEGEGNIQGVGEGGEVGVVGEVEGVGEVEEVEELEEETAKEEPADFPVEQPEEN.

Residues 1–124 (MDFEDDYTHS…YRNSLDSFGG (124 aa)) are mediates transcriptional activation. Phosphoserine occurs at positions 48, 56, 63, 69, 81, 82, 91, 106, 114, 118, 121, and 137. K140 is covalently cross-linked (Glycyl lysine isopeptide (Lys-Gly) (interchain with G-Cter in SUMO2)). The segment at 154–194 (YSSYSSFSSPHMKPAPVGSRGRGTPAYPESTFGSRNYDAFG) is disordered. R173 is subject to Omega-N-methylarginine. S212 is modified (phosphoserine). Residue R235 is modified to Omega-N-methylarginine. Residues 238-260 (KRKMMQPFNKPSGTFIKKPKLAK) carry the Bipartite nuclear localization signal motif. A Glycyl lysine isopeptide (Lys-Gly) (interchain with G-Cter in SUMO2) cross-link involves residue K240. The segment at 243–302 (QPFNKPSGTFIKKPKLAKPMEKISLSKSPTKTDPKNEEEEKRRIEARREKQRRRREKNSE) is disordered. K247 carries the N6-acetyllysine; alternate modification. A Glycyl lysine isopeptide (Lys-Gly) (interchain with G-Cter in SUMO2); alternate cross-link involves residue K247. S249 carries the post-translational modification Phosphoserine. The residue at position 251 (T251) is a Phosphothreonine. Residues K254 and K264 each participate in a glycyl lysine isopeptide (Lys-Gly) (interchain with G-Cter in SUMO2) cross-link. Position 270 is a phosphoserine (S270). Residues 272-290 (TKTDPKNEEEEKRRIEARR) are compositionally biased toward basic and acidic residues. A C2H2 AKAP95-type 1 zinc finger spans residues 314-336 (CSFCKFRTFEEKDIELHLESSSH). K401 is covalently cross-linked (Glycyl lysine isopeptide (Lys-Gly) (interchain with G-Cter in SUMO2)). Residues 407 to 430 (CSACSVYIPALHSSVQQHLKSPDH) form a C2H2 AKAP95-type 2 zinc finger. Residues K459 and K467 each participate in a glycyl lysine isopeptide (Lys-Gly) (interchain with G-Cter in SUMO2) cross-link. The segment at 472-582 (FEIQDHSQDQ…DFPVEQPEEN (111 aa)) is disordered. Over residues 483–523 (IEGDEEDEEKIDEPIEEEEDEDEEEEAEEVGEVEEVEEVEE) the composition is skewed to acidic residues. Over residues 530 to 545 (EGEGNIQGVGEGGEVG) the composition is skewed to gly residues. The segment covering 552-567 (GVGEVEEVEELEEETA) has biased composition (acidic residues).

It belongs to the AKAP95 family. In terms of assembly, component of the DBIRD complex. Interacts with CCAR2; the interaction is direct.

Its subcellular location is the nucleus matrix. Functionally, core component of the DBIRD complex, a multiprotein complex that acts at the interface between core mRNP particles and RNA polymerase II (RNAPII) and integrates transcript elongation with the regulation of alternative splicing: the DBIRD complex affects local transcript elongation rates and alternative splicing of a large set of exons embedded in (A + T)-rich DNA regions. May play a role in neuronal differentiation and is able to bind DNA and activate expression in vitro. The sequence is that of DBIRD complex subunit ZNF326 (ZNF326) from Homo sapiens (Human).